The following is a 298-amino-acid chain: MTDPLSRAGLVIVDKPAGMTSHDVVSRCRRIFSTRKVGHAGTLDPMATGVLVIGIERATKIMGLLTLTTKSYAATIRFGQSTSTDDAEGEVLQTISASHLTEVDIEAAVAGLRGDIAQVPSSVSAIKVDGQRAYKLAREGQSVELAARPVRISRFDVLAVRGSGEDLIDVDVEIDCSSGTYIRALARDAGAALGVGGHLTALRRTRVGDFGLDRARTLEELADGATLTLDLDSACRQGFPRRDLDAAEVDAVRNGRPLAPAGIEGTYAAVDADDRVIALLADKGSRTTSVVVLRPANL.

Asp-44 (nucleophile) is an active-site residue.

Belongs to the pseudouridine synthase TruB family. Type 1 subfamily.

The catalysed reaction is uridine(55) in tRNA = pseudouridine(55) in tRNA. Responsible for synthesis of pseudouridine from uracil-55 in the psi GC loop of transfer RNAs. The chain is tRNA pseudouridine synthase B from Mycobacteroides abscessus (strain ATCC 19977 / DSM 44196 / CCUG 20993 / CIP 104536 / JCM 13569 / NCTC 13031 / TMC 1543 / L948) (Mycobacterium abscessus).